We begin with the raw amino-acid sequence, 165 residues long: Large ribosomal subunit protein uL10 (165 aa).

The protein belongs to the universal ribosomal protein uL10 family. As to quaternary structure, part of the ribosomal stalk of the 50S ribosomal subunit. The N-terminus interacts with L11 and the large rRNA to form the base of the stalk. The C-terminus forms an elongated spine to which L12 dimers bind in a sequential fashion forming a multimeric L10(L12)X complex.

Its function is as follows. Forms part of the ribosomal stalk, playing a central role in the interaction of the ribosome with GTP-bound translation factors. In Mycoplasmopsis synoviae (strain 53) (Mycoplasma synoviae), this protein is Large ribosomal subunit protein uL10.